A 49-amino-acid polypeptide reads, in one-letter code: Large ribosomal subunit protein bL33B (49 aa).

The protein belongs to the bacterial ribosomal protein bL33 family.

In Lactococcus lactis subsp. cremoris (Streptococcus cremoris), this protein is Large ribosomal subunit protein bL33B (rpmG2).